Consider the following 354-residue polypeptide: Nicotinate-nucleotide--dimethylbenzimidazole phosphoribosyltransferase (354 aa).

The active-site Proton acceptor is the Glu-322.

This sequence belongs to the CobT family.

The catalysed reaction is 5,6-dimethylbenzimidazole + nicotinate beta-D-ribonucleotide = alpha-ribazole 5'-phosphate + nicotinate + H(+). It participates in nucleoside biosynthesis; alpha-ribazole biosynthesis; alpha-ribazole from 5,6-dimethylbenzimidazole: step 1/2. Its function is as follows. Catalyzes the synthesis of alpha-ribazole-5'-phosphate from nicotinate mononucleotide (NAMN) and 5,6-dimethylbenzimidazole (DMB). The protein is Nicotinate-nucleotide--dimethylbenzimidazole phosphoribosyltransferase of Solidesulfovibrio magneticus (strain ATCC 700980 / DSM 13731 / RS-1) (Desulfovibrio magneticus).